Consider the following 68-residue polypeptide: UPF0253 protein VFMJ11_0680 (68 aa).

It belongs to the UPF0253 family.

The protein is UPF0253 protein VFMJ11_0680 of Aliivibrio fischeri (strain MJ11) (Vibrio fischeri).